Here is a 468-residue protein sequence, read N- to C-terminus: E3 ubiquitin-protein ligase RGLG2 (468 aa).

Residues 1–89 (MGTGNSKENW…PSQSYGSDNK (89 aa)) are disordered. Residue Gly-2 is the site of N-myristoyl glycine attachment. Residues 12 to 45 (QSSFRSTSASSASPSSSSWASQQSYPQYGAESYN) show a composition bias toward low complexity. Over residues 46-65 (YPPPPSYAQPPEYTQPPPPL) the composition is skewed to pro residues. The span at 66-84 (YSTQPYSAPSYSAPPSQSY) shows a compositional bias: low complexity. One can recognise a VWFA domain in the interval 122 to 342 (NLIVGIDFTK…KETEFALSAL (221 aa)). The tract at residues 369–416 (FPLPPPMRGGSSSYNSPKPSRLPSFKPSVPPHPTEGYHVRSSPVPPPT) is disordered. The segment at 425 to 458 (CPICLSNPKDMAFGCGHQTCCECGPDLQMCPICR) adopts an RING-type zinc-finger fold.

As to quaternary structure, interacts with the heterodimer UBC35/UEV1B, UBC35 alone, PIN1, but not with UCB2, UCB9, UEV1B or UEV1C alone. Interacts with ERF053. In terms of processing, N-myristoylated. In terms of tissue distribution, ubiquitously expressed.

It is found in the cell membrane. The protein localises to the nucleus. The catalysed reaction is S-ubiquitinyl-[E2 ubiquitin-conjugating enzyme]-L-cysteine + [acceptor protein]-L-lysine = [E2 ubiquitin-conjugating enzyme]-L-cysteine + N(6)-ubiquitinyl-[acceptor protein]-L-lysine.. E3 ubiquitin-protein ligase that mediates the formation of 'Lys-63'-linked ubiquitin chains. Regulates apical dominance by acting on the auxin transport proteins abundance. Mediates ubiquitination and subsequent proteasomal degradation of ERF053 in response to drought stress. Acts as a negative regulator of drought stress response. This Arabidopsis thaliana (Mouse-ear cress) protein is E3 ubiquitin-protein ligase RGLG2.